The primary structure comprises 221 residues: Ribosomal RNA small subunit methyltransferase G (221 aa).

Residues Gly-89, Leu-94, 140 to 141 (VE), and Arg-154 contribute to the S-adenosyl-L-methionine site.

The protein belongs to the methyltransferase superfamily. RNA methyltransferase RsmG family.

The protein localises to the cytoplasm. It carries out the reaction guanosine(527) in 16S rRNA + S-adenosyl-L-methionine = N(7)-methylguanosine(527) in 16S rRNA + S-adenosyl-L-homocysteine. Specifically methylates the N7 position of guanine in position 527 of 16S rRNA. The polypeptide is Ribosomal RNA small subunit methyltransferase G (Methylibium petroleiphilum (strain ATCC BAA-1232 / LMG 22953 / PM1)).